The following is a 797-amino-acid chain: Protein tamozhennic (797 aa).

The 68-residue stretch at 79–146 folds into the PUB domain; it reads QNAIVAFETI…AAEDTFVLEG (68 aa). Disordered stretches follow at residues 515–570 and 638–697; these read AGGI…ISDL and LSIT…SAGV. Over residues 662-679 the composition is skewed to basic and acidic residues; sequence EKARTLDKKSGTGRREAK. The segment at 735–766 adopts a RanBP2-type zinc-finger fold; the sequence is IVTSPNEWSCSFCTFLNPDTKRICEMCCRSKD.

As to quaternary structure, homomultimer. Binds to dl and msl-1 via their nuclear localization signal (NLS). Also binds to Ran, Ran-like and mbo.

Its subcellular location is the cytoplasm. Functionally, has an essential role during oogenesis and embryogenesis, perhaps in modulating the levels of nuclear import of additional proteins. Modulates the nuclear import of dorsal (dl), Dif and male specific lethal 1 (msl-1). Negatively regulates nuclear import of dl and controls the accumulation of dl in the nucleus after immune challenge. The sequence is that of Protein tamozhennic (tamo) from Drosophila melanogaster (Fruit fly).